A 247-amino-acid polypeptide reads, in one-letter code: Coproheme decarboxylase (247 aa).

Residues arginine 129, 143–147, histidine 170, glutamine 183, and serine 221 contribute to the Fe-coproporphyrin III site; that span reads YPMDK. Tyrosine 143 is an active-site residue.

It belongs to the ChdC family. Type 1 subfamily. It depends on Fe-coproporphyrin III as a cofactor.

It catalyses the reaction Fe-coproporphyrin III + 2 H2O2 + 2 H(+) = heme b + 2 CO2 + 4 H2O. It carries out the reaction Fe-coproporphyrin III + H2O2 + H(+) = harderoheme III + CO2 + 2 H2O. The catalysed reaction is harderoheme III + H2O2 + H(+) = heme b + CO2 + 2 H2O. It functions in the pathway porphyrin-containing compound metabolism; protoheme biosynthesis. Involved in coproporphyrin-dependent heme b biosynthesis. Catalyzes the decarboxylation of Fe-coproporphyrin III (coproheme) to heme b (protoheme IX), the last step of the pathway. The reaction occurs in a stepwise manner with a three-propionate intermediate. In Bacillus cereus (strain B4264), this protein is Coproheme decarboxylase.